A 206-amino-acid chain; its full sequence is Thiamine-phosphate synthase (206 aa).

Residues 36-40 (QLRAK) and Asn68 contribute to the 4-amino-2-methyl-5-(diphosphooxymethyl)pyrimidine site. 2 residues coordinate Mg(2+): Asp69 and Asp88. Ser105 lines the 4-amino-2-methyl-5-(diphosphooxymethyl)pyrimidine pocket. 131 to 133 (TPT) provides a ligand contact to 2-[(2R,5Z)-2-carboxy-4-methylthiazol-5(2H)-ylidene]ethyl phosphate. Lys134 contributes to the 4-amino-2-methyl-5-(diphosphooxymethyl)pyrimidine binding site. Gly162 is a 2-[(2R,5Z)-2-carboxy-4-methylthiazol-5(2H)-ylidene]ethyl phosphate binding site.

It belongs to the thiamine-phosphate synthase family. Mg(2+) serves as cofactor.

It carries out the reaction 2-[(2R,5Z)-2-carboxy-4-methylthiazol-5(2H)-ylidene]ethyl phosphate + 4-amino-2-methyl-5-(diphosphooxymethyl)pyrimidine + 2 H(+) = thiamine phosphate + CO2 + diphosphate. The enzyme catalyses 2-(2-carboxy-4-methylthiazol-5-yl)ethyl phosphate + 4-amino-2-methyl-5-(diphosphooxymethyl)pyrimidine + 2 H(+) = thiamine phosphate + CO2 + diphosphate. It catalyses the reaction 4-methyl-5-(2-phosphooxyethyl)-thiazole + 4-amino-2-methyl-5-(diphosphooxymethyl)pyrimidine + H(+) = thiamine phosphate + diphosphate. The protein operates within cofactor biosynthesis; thiamine diphosphate biosynthesis; thiamine phosphate from 4-amino-2-methyl-5-diphosphomethylpyrimidine and 4-methyl-5-(2-phosphoethyl)-thiazole: step 1/1. Condenses 4-methyl-5-(beta-hydroxyethyl)thiazole monophosphate (THZ-P) and 2-methyl-4-amino-5-hydroxymethyl pyrimidine pyrophosphate (HMP-PP) to form thiamine monophosphate (TMP). The chain is Thiamine-phosphate synthase from Thermus thermophilus (strain ATCC BAA-163 / DSM 7039 / HB27).